Consider the following 297-residue polypeptide: Taste receptor type 2 member 4 (297 aa).

Residues 1-11 (MLWELYVFVFA) are Extracellular-facing. The helical transmembrane segment at 12–32 (ASVFLNFVGIIANLFIIVIII) threads the bilayer. The Cytoplasmic portion of the chain corresponds to 33–46 (KTWVNSRRIASPDR). The helical transmembrane segment at 47 to 67 (ILFSLAITRFLTLGLFLLNSV) threads the bilayer. Topologically, residues 68–80 (YIATNTGRSVYFS) are extracellular. Residues 81–101 (TFFLLCWKFLDANSLWLVTIL) form a helical membrane-spanning segment. At 102 to 128 (NSLYCVKITNFQHPVFLLLKRTISMKT) the chain is on the cytoplasmic side. The helical transmembrane segment at 129–149 (TSLLLACLLISALTTLLYYML) threads the bilayer. Residues 150-171 (SQISRFPEHIIGRNDTSFDLSD) lie on the Extracellular side of the membrane. The N-linked (GlcNAc...) asparagine glycan is linked to asparagine 163. A helical membrane pass occupies residues 172–192 (GILTLVASLVLNSLLQFMLNV). The Cytoplasmic portion of the chain corresponds to 193–229 (TFASLLIHSLRRHIQKMQRNRTSFWNPQTEAHMGAMR). A helical membrane pass occupies residues 230–250 (LMICFLVLYIPYSIATLLYLP). The Extracellular segment spans residues 251-260 (SYMRKNLRAQ). Residues 261-281 (AICMIITAAYPPGHSVLLIIT) traverse the membrane as a helical segment. The Cytoplasmic portion of the chain corresponds to 282–297 (HHKLKAKAKKIFCFYK).

The protein belongs to the G-protein coupled receptor T2R family. Expressed in subsets of taste receptor cells of the tongue and palate epithelium and exclusively in gustducin-positive cells. Expressed in 15% taste bud cells in circumvallate and foliate papillae but only in 2% in fungiform papillae.

The protein localises to the membrane. It is found in the cell projection. The protein resides in the cilium membrane. In terms of biological role, gustducin-coupled receptor for denatonium and N(6)-propyl-2-thiouracil implicated in the perception of bitter compounds in the oral cavity and the gastrointestinal tract. Signals through PLCB2 and the calcium-regulated cation channel TRPM5. In airway epithelial cells, binding of denatonium increases the intracellular calcium ion concentration and stimulates ciliary beat frequency. This is Taste receptor type 2 member 4 (Tas2r4) from Mus musculus (Mouse).